The sequence spans 577 residues: Beta-glucosidase 30 (577 aa).

A signal peptide spans 1–23 (MAKGSWFFIILFIISMLENMINS). A beta-D-glucoside contacts are provided by residues glutamine 45, histidine 148, and 193–194 (NE). The active-site Proton donor is glutamate 194. Cysteine 213 and cysteine 221 are disulfide-bonded. Asparagine 328 carries an N-linked (GlcNAc...) asparagine glycan. Tyrosine 338 lines the a beta-D-glucoside pocket. A glycan (N-linked (GlcNAc...) asparagine) is linked at asparagine 368. A beta-D-glucoside-binding positions include glutamate 410, tryptophan 460, 467 to 468 (EW), and phenylalanine 476. The Nucleophile role is filled by glutamate 410. N-linked (GlcNAc...) asparagine glycosylation is found at asparagine 524 and asparagine 544.

This sequence belongs to the glycosyl hydrolase 1 family.

The catalysed reaction is Hydrolysis of terminal, non-reducing beta-D-glucosyl residues with release of beta-D-glucose.. This is Beta-glucosidase 30 from Arabidopsis thaliana (Mouse-ear cress).